The sequence spans 141 residues: Galactose-6-phosphate isomerase subunit LacA 1 (141 aa).

This sequence belongs to the LacAB/RpiB family. As to quaternary structure, heteromultimeric protein consisting of LacA and LacB.

It catalyses the reaction aldehydo-D-galactose 6-phosphate = keto-D-tagatose 6-phosphate. The protein operates within carbohydrate metabolism; D-galactose 6-phosphate degradation; D-tagatose 6-phosphate from D-galactose 6-phosphate: step 1/1. In Streptococcus agalactiae serotype III (strain NEM316), this protein is Galactose-6-phosphate isomerase subunit LacA 1.